A 120-amino-acid polypeptide reads, in one-letter code: Large ribosomal subunit protein uL22 (120 aa).

Belongs to the universal ribosomal protein uL22 family. Part of the 50S ribosomal subunit.

In terms of biological role, this protein binds specifically to 23S rRNA; its binding is stimulated by other ribosomal proteins, e.g. L4, L17, and L20. It is important during the early stages of 50S assembly. It makes multiple contacts with different domains of the 23S rRNA in the assembled 50S subunit and ribosome. Functionally, the globular domain of the protein is located near the polypeptide exit tunnel on the outside of the subunit, while an extended beta-hairpin is found that lines the wall of the exit tunnel in the center of the 70S ribosome. The polypeptide is Large ribosomal subunit protein uL22 (Corynebacterium diphtheriae (strain ATCC 700971 / NCTC 13129 / Biotype gravis)).